A 194-amino-acid polypeptide reads, in one-letter code: dTTP/UTP pyrophosphatase (194 aa).

Catalysis depends on D69, which acts as the Proton acceptor.

This sequence belongs to the Maf family. YhdE subfamily. A divalent metal cation is required as a cofactor.

Its subcellular location is the cytoplasm. It carries out the reaction dTTP + H2O = dTMP + diphosphate + H(+). The enzyme catalyses UTP + H2O = UMP + diphosphate + H(+). Its function is as follows. Nucleoside triphosphate pyrophosphatase that hydrolyzes dTTP and UTP. May have a dual role in cell division arrest and in preventing the incorporation of modified nucleotides into cellular nucleic acids. The sequence is that of dTTP/UTP pyrophosphatase from Symbiobacterium thermophilum (strain DSM 24528 / JCM 14929 / IAM 14863 / T).